Here is a 552-residue protein sequence, read N- to C-terminus: Beta-hexosaminidase A (552 aa).

The first 15 residues, 1-15, serve as a signal peptide directing secretion; sequence MRLIVLSLLFTSTLA. N-linked (GlcNAc...) asparagine glycosylation occurs at Asn44. The Proton donor role is filled by Glu322. N-linked (GlcNAc...) asparagine glycosylation is found at Asn348, Asn409, and Asn457.

Belongs to the glycosyl hydrolase 20 family.

The protein resides in the lysosome. It carries out the reaction Hydrolysis of terminal non-reducing N-acetyl-D-hexosamine residues in N-acetyl-beta-D-hexosaminides.. Responsible for the degradation of GM2 gangliosides, and a variety of other molecules containing terminal N-acetyl hexosamines. Degrades chitotriose. The sequence is that of Beta-hexosaminidase A from Caenorhabditis briggsae.